The following is a 240-amino-acid chain: Late expression factor 5 homolog (240 aa).

Belongs to the baculoviridae LEF-5 family.

Functionally, required for late and very late gene expression. This is Late expression factor 5 homolog from Tortricidae (ClGV).